A 222-amino-acid chain; its full sequence is Glutathione S-transferase A2 (222 aa).

An N-acetylalanine modification is found at Ala2. Residues 3 to 83 (EKPKLHYSNI…YIASKYNLYG (81 aa)) form the GST N-terminal domain. Lys4 carries the post-translational modification N6-succinyllysine. Glutathione is bound by residues Tyr9, Arg45, 54 to 55 (QV), and 67 to 68 (QT). In terms of domain architecture, GST C-terminal spans 85-207 (DIKEKALIDM…LQPGSPRKPP (123 aa)). The segment at 199 to 222 (QPGSPRKPPMDEKSLEESRKIFRF) is disordered. Residues 206-222 (PPMDEKSLEESRKIFRF) are compositionally biased toward basic and acidic residues.

It belongs to the GST superfamily. Alpha family. Homodimer or heterodimer of GSTA1 and GSTA2. Liver.

Its subcellular location is the cytoplasm. The enzyme catalyses RX + glutathione = an S-substituted glutathione + a halide anion + H(+). Its function is as follows. Catalyzes the conjugation of glutathione to a large variety of electrophilic compounds. In Homo sapiens (Human), this protein is Glutathione S-transferase A2 (GSTA2).